Reading from the N-terminus, the 196-residue chain is Venom platylysin (196 aa).

The protein belongs to the redulysin-like family. Expressed by the venom gland.

It localises to the secreted. Its function is as follows. Probable insecticidal toxin that has been detected in a semi-pure insecticidal fraction. In Platymeris biguttatus (Two-spotted assassin bug), this protein is Venom platylysin.